The primary structure comprises 387 residues: Probable serine/threonine-protein kinase PBL18 (387 aa).

The tract at residues 1 to 37 (MGNCLDSSARVGNRESTFGGSSRISRKPNQSSRLSSL) is disordered. G2 carries N-myristoyl glycine lipidation. C4 is lipidated: S-palmitoyl cysteine. The segment covering 14–37 (RESTFGGSSRISRKPNQSSRLSSL) has biased composition (polar residues). Position 73 is a phosphothreonine (T73). Residues 84 to 365 (FKPNSMIGEG…ADVLSTLQQL (282 aa)) form the Protein kinase domain. Residues 90–98 (IGEGGFGCV) and K122 each bind ATP. Y167 carries the phosphotyrosine modification. D215 serves as the catalytic Proton acceptor. S219 is subject to Phosphoserine. Phosphothreonine is present on residues T250 and T255. Y263 carries the post-translational modification Phosphotyrosine. A disordered region spans residues 368 to 387 (SSKKMGSTQNIVMSPSSHMS).

It belongs to the protein kinase superfamily. Ser/Thr protein kinase family.

The protein resides in the cell membrane. The enzyme catalyses L-seryl-[protein] + ATP = O-phospho-L-seryl-[protein] + ADP + H(+). It catalyses the reaction L-threonyl-[protein] + ATP = O-phospho-L-threonyl-[protein] + ADP + H(+). Functionally, may be involved in plant defense signaling. The polypeptide is Probable serine/threonine-protein kinase PBL18 (Arabidopsis thaliana (Mouse-ear cress)).